A 527-amino-acid chain; its full sequence is Peptide chain release factor 3 (527 aa).

The tr-type G domain maps to 11 to 278; the sequence is AKRRTFAIIS…GFVEWAPAPL (268 aa). Residues 20-27, 87-91, and 141-144 contribute to the GTP site; these read SHPDAGKT, DTPGH, and NKMD.

The protein belongs to the TRAFAC class translation factor GTPase superfamily. Classic translation factor GTPase family. PrfC subfamily.

It localises to the cytoplasm. Increases the formation of ribosomal termination complexes and stimulates activities of RF-1 and RF-2. It binds guanine nucleotides and has strong preference for UGA stop codons. It may interact directly with the ribosome. The stimulation of RF-1 and RF-2 is significantly reduced by GTP and GDP, but not by GMP. The protein is Peptide chain release factor 3 of Teredinibacter turnerae (strain ATCC 39867 / T7901).